The chain runs to 1402 residues: MKELIEMYKPHNIAEDFDKIHIGLASPDVIRSWSYGEVKKPETINYRTFKPERDGLFCAKIFGPIKDYECLCGKYKRLKHRGVVCERCGVEVTKSSVRRERMGHIELATPVAHIWFLKSLPSRIGLLLDLTLREIERVLYFESFIVIDPGMTPLEKHQLLNEDAYKEAVDMYGHEFKAMMGAEAIQYILKNMNLENEIQDIHEQLNATHSETKIKRLLKRLKLMTSLLDSGNKPEWMILEVLPVLPPDLRPLVPLDSGRFATSDLNDLYRRVINRNNRLKRLLELYAPDIIVRNEKRMLQEAVDSLLDNGRRGRTVTGTNKRPLKSLADMIKGKQGRFRQNLLGKRVDYSGRSVIVVGPTLRLHQCGLPKRMALELFKPFIFHYLITNEFASTIKAAKLMVERDEPAVWDALEFVIRQHPVMLNRAPTLHRLGIQAFEPILIEGKAIQLHPLACAAFNADFDGDQMAVHVPLSLEAQLEARTLMMSSNNILSPANGEPIIVPSQDMVLGLYYMTRERINAKGEGMRFTDVKEVERAYQNGLVDLQAIIEVRLPHYEENGTGEGTLVRTKTTVGRALLSQILPKGLSFSYIDKPMKKKAISALINQCYRQLGLKDTVILADQLMYTGYHYATRSGSSIGVSDMVVPDAKAEILARSEAEVKEIEHQYASGLLTSGEKYNKVIDIWSRTGDQVARKMMEQLGKVRLQNRQGEWVEQDSFNSVYMMADSGARGSAAQIRQLAGMRGLMAKPDGSIIETPITANFREGLNVLQYFISTHGARKGLADTALKTANSGYLTRRLVDVAQDVVITEDDCGTTEGIEIQAVVEGGDVVVSLADRVLGRVLSEPVIDGNTGEVALAAGTLLEEPQIAILEKAGVDRVFVRSVITCATRHGVCAKCYGRDLARGHLVTAGEAVGVIAAQSIGEPGTQLTMRTFHIGGAAQSAASIGSVEVKTNGVARLSNMKTVVNKDGKLVSISRSGELSIIDMYGHERERYKLPYGATLNIANGEEVKQGQILATWDPHTHPVIAEVAGKASFFDFEDGVTVQTSSDADTGLAVLTILDNAQRPTSAKDKRPLIQLLDENGNPVTSAGSEIPVNYFLPAGAVVNLNDGDDIHIGDVLARIPQASGKLSDITGGLPRVADLFEARKPKEPAILAEITGTVSFGKETKGKQRLVINSDDGEVFEILIPKWRRLNVFEGEQVRKGEILADGEPSPHDILRLRGVHELNEHIVREIQTVYRLQGVKINDKHIEVIVRQMLRKVLILDAGESHFIAGEQAELTRVLQENDRLQAQNKLPIRYEPILMGITKASLATESFISAASFQETTRVLTEASVLGQVDDLFGLKENVIVGRLIPAGTGLAYHQHRRNMRDEDRFLNGSASSNEKSRSAGVLEATDEESAGD.

Residues Cys70, Cys72, Cys85, and Cys88 each coordinate Zn(2+). Mg(2+) is bound by residues Asp460, Asp462, and Asp464. Residues Cys812, Cys886, Cys893, and Cys896 each contribute to the Zn(2+) site. The tract at residues 1373-1402 (DRFLNGSASSNEKSRSAGVLEATDEESAGD) is disordered.

The protein belongs to the RNA polymerase beta' chain family. The RNAP catalytic core consists of 2 alpha, 1 beta, 1 beta' and 1 omega subunit. When a sigma factor is associated with the core the holoenzyme is formed, which can initiate transcription. It depends on Mg(2+) as a cofactor. Zn(2+) serves as cofactor.

It carries out the reaction RNA(n) + a ribonucleoside 5'-triphosphate = RNA(n+1) + diphosphate. In terms of biological role, DNA-dependent RNA polymerase catalyzes the transcription of DNA into RNA using the four ribonucleoside triphosphates as substrates. The protein is DNA-directed RNA polymerase subunit beta' of Dichelobacter nodosus (strain VCS1703A).